The primary structure comprises 225 residues: Germin-like protein 8-3 (225 aa).

The N-terminal stretch at Met-1–Ala-23 is a signal peptide. A disulfide bridge links Cys-33 with Cys-48. Residues Asn-53 and Asn-78 are each glycosylated (N-linked (GlcNAc...) asparagine). The Cupin type-1 domain maps to Phe-60–Asp-213. Positions 111, 113, 118, and 158 each coordinate Mn(2+).

This sequence belongs to the germin family. Oligomer (believed to be a pentamer but probably hexamer).

It is found in the secreted. It localises to the extracellular space. The protein resides in the apoplast. Plays a role in broad-spectrum disease resistance. Probably has no oxalate oxidase activity even if the active site is conserved. The polypeptide is Germin-like protein 8-3 (GER2) (Oryza sativa subsp. japonica (Rice)).